A 139-amino-acid chain; its full sequence is Class I hydrophobin A (139 aa).

A signal peptide spans 1–18; it reads MKFSIAAAVLALASAVVA. 4 disulfide bridges follow: C45–C113, C53–C107, C54–C88, and C114–C133.

This sequence belongs to the fungal hydrophobin family. Self-assembles to form functional amyloid fibrils called rodlets. Self-assembly into fibrillar rodlets occurs spontaneously at hydrophobic:hydrophilic interfaces and the rodlets further associate laterally to form amphipathic monolayers.

It localises to the secreted. It is found in the cell wall. In terms of biological role, aerial growth, conidiation, and dispersal of filamentous fungi in the environment rely upon a capability of their secreting small amphipathic proteins called hydrophobins (HPBs) with low sequence identity. Class I can self-assemble into an outermost layer of rodlet bundles on aerial cell surfaces, conferring cellular hydrophobicity that supports fungal growth, development and dispersal; whereas Class II form highly ordered films at water-air interfaces through intermolecular interactions but contribute nothing to the rodlet structure. HYPA is a class I hydrophobin that contributes to surface hydrophobicity, and prevents recognition by the cellular immune defense system. The polypeptide is Class I hydrophobin A (Arthroderma benhamiae (strain ATCC MYA-4681 / CBS 112371) (Trichophyton mentagrophytes)).